Consider the following 185-residue polypeptide: Ribosome-recycling factor (185 aa).

This sequence belongs to the RRF family.

It is found in the cytoplasm. Its function is as follows. Responsible for the release of ribosomes from messenger RNA at the termination of protein biosynthesis. May increase the efficiency of translation by recycling ribosomes from one round of translation to another. The polypeptide is Ribosome-recycling factor (Ehrlichia chaffeensis (strain ATCC CRL-10679 / Arkansas)).